Reading from the N-terminus, the 97-residue chain is MALSLFTVGQLIFLFWTLRITEANPDPAAKAAPAAVADPAAAAAAAVADTASDAAAAAAATAAAAAKAAADTAAAAAKAAADTAAAAAEAAAATARG.

Residues methionine 1–alanine 23 form the signal peptide. Positions asparagine 24–alanine 48 are cleaved as a propeptide — removed by a dipeptidylpeptidase.

The protein belongs to the type-I AFP family. In terms of tissue distribution, detected in blood serum (at protein level).

It is found in the secreted. Functionally, contributes to protect fish blood from freezing at subzero sea water temperatures. Lowers the blood freezing point. Binds to nascent ice crystals and prevents further growth. In Myzopsetta ferruginea (Yellowtail flounder), this protein is Ice-structuring protein.